We begin with the raw amino-acid sequence, 263 residues long: Lysine 5,6-aminomutase beta subunit (263 aa).

The region spanning 120–259 is the B12-binding domain; sequence EVVMVGASTG…TFILKEMVQR (140 aa). Residues 130–136 and His-133 each bind adenosylcob(III)alamin; that span reads TDAHTVG. Lys-144 is subject to N6-(pyridoxal phosphate)lysine. Residues 185-192, 219-223, and 239-244 contribute to the adenosylcob(III)alamin site; these read LVSQTVTQ, IAGGA, and FGPGKY.

The protein belongs to the KamE family. As to quaternary structure, heterotetramer of 2 alpha and 2 beta subunits. Adenosylcob(III)alamin is required as a cofactor. The cofactor is pyridoxal 5'-phosphate.

It carries out the reaction (3S)-3,6-diaminohexanoate = (3S,5S)-3,5-diaminohexanoate. The catalysed reaction is D-lysine = (2R,5S)-2,5-diaminohexanoate. It functions in the pathway amino-acid degradation; L-lysine degradation via acetate pathway. In terms of biological role, catalyzes the migration of the L-beta-lysine and D-lysine epsilon amino group to the delta carbon to produce 3,5-diaminohexanoate and 2,5-diaminohexanoate, respectively. The polypeptide is Lysine 5,6-aminomutase beta subunit (Fusobacterium nucleatum subsp. nucleatum (strain ATCC 25586 / DSM 15643 / BCRC 10681 / CIP 101130 / JCM 8532 / KCTC 2640 / LMG 13131 / VPI 4355)).